The sequence spans 161 residues: Phosphopantetheine adenylyltransferase (161 aa).

Position 9 (Thr-9) interacts with substrate. Residues 9-10 (TF) and His-17 contribute to the ATP site. Substrate is bound by residues Lys-41, Leu-73, and Arg-87. Residues 88–90 (GLR), Glu-98, and 123–129 (YQFISGT) each bind ATP.

This sequence belongs to the bacterial CoaD family. In terms of assembly, homohexamer. Mg(2+) serves as cofactor.

The protein resides in the cytoplasm. It carries out the reaction (R)-4'-phosphopantetheine + ATP + H(+) = 3'-dephospho-CoA + diphosphate. It functions in the pathway cofactor biosynthesis; coenzyme A biosynthesis; CoA from (R)-pantothenate: step 4/5. Reversibly transfers an adenylyl group from ATP to 4'-phosphopantetheine, yielding dephospho-CoA (dPCoA) and pyrophosphate. This Cupriavidus necator (strain ATCC 17699 / DSM 428 / KCTC 22496 / NCIMB 10442 / H16 / Stanier 337) (Ralstonia eutropha) protein is Phosphopantetheine adenylyltransferase.